Reading from the N-terminus, the 335-residue chain is Cathepsin B-like cysteine proteinase 4 (335 aa).

The N-terminal stretch at 1–15 is a signal peptide; it reads MKYLILAALVAVTAG. A propeptide spanning residues 16 to 80 is cleaved from the precursor; it reads LVIPLVPKTQ…VVKHDINEDT (65 aa). Cystine bridges form between cysteine 94–cysteine 123, cysteine 106–cysteine 150, cysteine 142–cysteine 209, cysteine 143–cysteine 146, cysteine 179–cysteine 213, and cysteine 187–cysteine 199. The active site involves cysteine 109. N-linked (GlcNAc...) asparagine glycosylation occurs at asparagine 193. Active-site residues include histidine 281 and asparagine 301.

This sequence belongs to the peptidase C1 family.

It is found in the secreted. In terms of biological role, thiol protease which shows activity against the fluorogenic substrate z-Arg-Arg-AMC. This is Cathepsin B-like cysteine proteinase 4 (cpr-4) from Caenorhabditis elegans.